Consider the following 411-residue polypeptide: O-glucosyltransferase rumi (411 aa).

A signal peptide spans M1–A20. Intrachain disulfides connect C64-C75, C73-C378, C120-C126, and C282-C305. The active-site Proton donor/acceptor is the D151. The interaction with the consensus sequence C-X-S-X-[PA]-C in peptide substrates stretch occupies residues A192–P197. UDP-alpha-D-glucose is bound by residues R229–T233, R237, V276–F278, and A294–R298. Positions K408–L411 match the Prevents secretion from ER motif.

The protein belongs to the glycosyltransferase 90 family.

The protein localises to the endoplasmic reticulum lumen. Its pathway is protein modification; protein glycosylation. In terms of biological role, protein O-glucosyltransferase. Catalyzes the reaction that attaches glucose through an O-glycosidic linkage to a conserved serine residue found in the consensus sequence C-X-S-X-[PA]-C in epidermal growth factor-like repeats. Regulates Notch signaling by glucosylating Notch in the ER, glucosylation is required for the correct folding and cleavage of Notch. The chain is O-glucosyltransferase rumi from Drosophila melanogaster (Fruit fly).